Reading from the N-terminus, the 176-residue chain is Cytochrome b561 homolog 1 (176 aa).

Topologically, residues 1 to 7 (MNRFSKT) are cytoplasmic. The helical transmembrane segment at 8–28 (QIYLHWITLLFVAITYAAMEL) threads the bilayer. Position 12 (His12) interacts with heme b. Over 29–45 (RGWFPKGSSTYLLMRET) the chain is Periplasmic. His46 contributes to the heme b binding site. The chain crosses the membrane as a helical span at residues 46–63 (HYNAGIFVWVLMFSRLII). Residues 64 to 85 (KHRYSDPSIVPPPPAWQMKAAS) are Cytoplasmic-facing. The helical transmembrane segment at 86–106 (LMHIMLYITFLALPLLGIALM) threads the bilayer. Residues 107 to 141 (AYSGKSWSFLGFNVSPFVTPNSEIKALIKNIHETW) lie on the Periplasmic side of the membrane. Residues His138 and His152 each coordinate heme b. Residues 142 to 162 (ANIGYFLIAAHAGAALFHHYI) traverse the membrane as a helical segment. Residues 163-176 (QKDNTLLRMMPRRK) lie on the Cytoplasmic side of the membrane.

The protein belongs to the cytochrome b561 family. The cofactor is heme b.

It is found in the cell inner membrane. In Escherichia coli (strain K12), this protein is Cytochrome b561 homolog 1 (yodB).